We begin with the raw amino-acid sequence, 252 residues long: PHD finger protein ALFIN-LIKE 7 (252 aa).

Positions 141–193 (AKQSKDQSANHNSSRSKSSGGKPRHSESHTKASKMSPPPRKEDESGDEDEDDE) are disordered. Over residues 149 to 161 (ANHNSSRSKSSGG) the composition is skewed to low complexity. At S176 the chain carries Phosphoserine. A compositionally biased stretch (acidic residues) spans 184-193 (ESGDEDEDDE). The segment at 195–247 (GAVCGACGDNYGGDEFWICCDACEKWFHGKCVKITPAKAEHIKHYKCPSCTTS) adopts a PHD-type zinc-finger fold.

It belongs to the Alfin family. Interacts with H3K4me3 and to a lesser extent with H3K4me2. In terms of tissue distribution, ubiquitously expressed.

The protein localises to the nucleus. Histone-binding component that specifically recognizes H3 tails trimethylated on 'Lys-4' (H3K4me3), which mark transcription start sites of virtually all active genes. The sequence is that of PHD finger protein ALFIN-LIKE 7 (AL7) from Arabidopsis thaliana (Mouse-ear cress).